A 256-amino-acid chain; its full sequence is tRNA pseudouridine synthase A (256 aa).

D52 acts as the Nucleophile in catalysis. Substrate is bound at residue Y110.

This sequence belongs to the tRNA pseudouridine synthase TruA family. As to quaternary structure, homodimer.

The catalysed reaction is uridine(38/39/40) in tRNA = pseudouridine(38/39/40) in tRNA. Its function is as follows. Formation of pseudouridine at positions 38, 39 and 40 in the anticodon stem and loop of transfer RNAs. The chain is tRNA pseudouridine synthase A from Stenotrophomonas maltophilia (strain K279a).